We begin with the raw amino-acid sequence, 303 residues long: UDP-N-acetylenolpyruvoylglucosamine reductase (303 aa).

The region spanning Lys30–Gly195 is the FAD-binding PCMH-type domain. The active site involves Arg174. Residue Ser224 is the Proton donor of the active site. Glu294 is a catalytic residue.

The protein belongs to the MurB family. It depends on FAD as a cofactor.

It is found in the cytoplasm. The catalysed reaction is UDP-N-acetyl-alpha-D-muramate + NADP(+) = UDP-N-acetyl-3-O-(1-carboxyvinyl)-alpha-D-glucosamine + NADPH + H(+). The protein operates within cell wall biogenesis; peptidoglycan biosynthesis. Cell wall formation. The protein is UDP-N-acetylenolpyruvoylglucosamine reductase of Latilactobacillus sakei subsp. sakei (strain 23K) (Lactobacillus sakei subsp. sakei).